A 134-amino-acid polypeptide reads, in one-letter code: Profilin-3 (134 aa).

Cysteine 13 and cysteine 118 form a disulfide bridge. An Involved in PIP2 interaction motif is present at residues 84–100 (AVIRGKKGSGGITIKKT). Threonine 114 carries the phosphothreonine modification.

Belongs to the profilin family. Occurs in many kinds of cells as a complex with monomeric actin in a 1:1 ratio. Post-translationally, phosphorylated by MAP kinases.

The protein resides in the cytoplasm. It localises to the cytoskeleton. In terms of biological role, binds to actin and affects the structure of the cytoskeleton. At high concentrations, profilin prevents the polymerization of actin, whereas it enhances it at low concentrations. This chain is Profilin-3, found in Olea europaea (Common olive).